The chain runs to 417 residues: Peptidyl-Asp metalloendopeptidase (417 aa).

A signal peptide spans 1 to 23 (MKSKSMCTTVGLIAMCLAGSAAA). Position 331 (His-331) interacts with Zn(2+). Glu-332 is an active-site residue. Residues His-335 and His-341 each contribute to the Zn(2+) site.

The protein belongs to the peptidase M72 family. The cofactor is Zn(2+).

It carries out the reaction Cleavage of Xaa-|-Asp, Xaa-|-Glu and Xaa-|-cysteic acid bonds.. Its function is as follows. Metalloprotease, specifically cleaves on the N-terminal side of aspartyl, glutamyl and cysteic acid residues. The chain is Peptidyl-Asp metalloendopeptidase from Xanthomonas campestris pv. campestris (strain ATCC 33913 / DSM 3586 / NCPPB 528 / LMG 568 / P 25).